A 410-amino-acid polypeptide reads, in one-letter code: Cysteine desulfurase IscS (410 aa).

Pyridoxal 5'-phosphate is bound by residues A80–T81, N160, Q188, and S208–H210. N6-(pyridoxal phosphate)lysine is present on K211. T248 lines the pyridoxal 5'-phosphate pocket. C334 serves as the catalytic Cysteine persulfide intermediate. A [2Fe-2S] cluster-binding site is contributed by C334.

Belongs to the class-V pyridoxal-phosphate-dependent aminotransferase family. NifS/IscS subfamily. As to quaternary structure, homodimer. Forms a heterotetramer with IscU, interacts with other sulfur acceptors. Pyridoxal 5'-phosphate serves as cofactor.

The protein localises to the cytoplasm. It catalyses the reaction (sulfur carrier)-H + L-cysteine = (sulfur carrier)-SH + L-alanine. The protein operates within cofactor biosynthesis; iron-sulfur cluster biosynthesis. In terms of biological role, master enzyme that delivers sulfur to a number of partners involved in Fe-S cluster assembly, tRNA modification or cofactor biosynthesis. Catalyzes the removal of elemental sulfur atoms from cysteine to produce alanine. Functions as a sulfur delivery protein for Fe-S cluster synthesis onto IscU, an Fe-S scaffold assembly protein, as well as other S acceptor proteins. The protein is Cysteine desulfurase IscS of Rickettsia africae (strain ESF-5).